Consider the following 777-residue polypeptide: Reticulon-1 (777 aa).

4 disordered regions span residues 1–77 (MAAP…ETAS), 129–182 (NGHI…ILAD), 198–245 (TRPQ…PVEG), and 293–573 (ATHE…IPGP). 2 positions are modified to phosphoserine: serine 13 and serine 68. Residues 199-233 (RPQEAKGQEEQSPGLEDKDLDFKDKDSEVSTKPEG) are compositionally biased toward basic and acidic residues. 3 positions are modified to phosphoserine: serine 210, serine 241, and serine 325. Residues 326 to 339 (PGSVTPPSSGTEPS) show a composition bias toward low complexity. 2 positions are modified to phosphoserine: serine 348 and serine 350. Over residues 393–406 (IPSSLDQEASSAES) the composition is skewed to polar residues. Residue serine 485 is modified to Phosphoserine. Positions 495 to 510 (AIREETSSRATEERAP) are enriched in basic and acidic residues. Polar residues predominate over residues 525 to 534 (TPVTLQSRPE). In terms of domain architecture, Reticulon spans 590 to 777 (AIDLLYWRDI…KIPGAKRHAE (188 aa)). 2 consecutive transmembrane segments (helical) span residues 604-624 (IVFGSFLLLLFSLTQFSVVSV) and 706-726 (FAVLMWLLTYVGALFNGLTLL).

As to quaternary structure, interacts with NDRG1. Interacts with BACE1. Interacts with TMEM33. In terms of assembly, interacts with UGCG; regulates the ceramide glucosyltransferase activity of UGCG. In terms of tissue distribution, expressed predominantly in central and peripheral nervous system of newborn and adult rats. Low levels have been also detected in heart, adrenal gland and spleen. Expression of isoform RTN1-B is restricted to particular neuronal types.

It localises to the endoplasmic reticulum membrane. The protein resides in the golgi apparatus membrane. Its function is as follows. Inhibits amyloid precursor protein processing, probably by blocking BACE1 activity. This Rattus norvegicus (Rat) protein is Reticulon-1 (Rtn1).